The following is a 250-amino-acid chain: Probable transcriptional regulatory protein DIP1378 (250 aa).

A disordered region spans residues 1 to 22 (MSGHSKWATTKHKKAANDAKRG).

The protein belongs to the TACO1 family.

It is found in the cytoplasm. This Corynebacterium diphtheriae (strain ATCC 700971 / NCTC 13129 / Biotype gravis) protein is Probable transcriptional regulatory protein DIP1378.